Here is a 143-residue protein sequence, read N- to C-terminus: Nucleoside diphosphate kinase (143 aa).

Residues K11, F59, R87, T93, R104, and N114 each contribute to the ATP site. Residue H117 is the Pros-phosphohistidine intermediate of the active site.

This sequence belongs to the NDK family. In terms of assembly, homotetramer. It depends on Mg(2+) as a cofactor.

The protein localises to the cytoplasm. It carries out the reaction a 2'-deoxyribonucleoside 5'-diphosphate + ATP = a 2'-deoxyribonucleoside 5'-triphosphate + ADP. It catalyses the reaction a ribonucleoside 5'-diphosphate + ATP = a ribonucleoside 5'-triphosphate + ADP. Functionally, major role in the synthesis of nucleoside triphosphates other than ATP. The ATP gamma phosphate is transferred to the NDP beta phosphate via a ping-pong mechanism, using a phosphorylated active-site intermediate. This is Nucleoside diphosphate kinase from Shewanella oneidensis (strain ATCC 700550 / JCM 31522 / CIP 106686 / LMG 19005 / NCIMB 14063 / MR-1).